The following is a 389-amino-acid chain: Phospho-N-acetylmuramoyl-pentapeptide-transferase (389 aa).

Transmembrane regions (helical) follow at residues 25-45 (RAVMANVTALVIGLGFGPWVI), 74-94 (MGGVLVLISIAISTLLWCDWG), 97-117 (FIWVVLLVTLGYGAIGWVDDY), 134-154 (FFWQTLIGLVAAVYLAFSVSE), 167-187 (WIEGGMFADVPYKMNLIVPFF), 190-210 (VSYPLGVTGFIVLTYLVIVGS), 222-242 (GLVIMPVVLVGGGLGVFAYVM), 259-279 (AGELLIFCSAMAGAGLAFLWF), 286-306 (VFMGDVGALALGGALGTVAVI), 311-331 (IVLFVMGGIFVVETLSVMLQV), and 366-386 (QVTVRFWIITMLLVLIGLSSL).

Belongs to the glycosyltransferase 4 family. MraY subfamily. It depends on Mg(2+) as a cofactor.

Its subcellular location is the cell inner membrane. The catalysed reaction is UDP-N-acetyl-alpha-D-muramoyl-L-alanyl-gamma-D-glutamyl-meso-2,6-diaminopimeloyl-D-alanyl-D-alanine + di-trans,octa-cis-undecaprenyl phosphate = di-trans,octa-cis-undecaprenyl diphospho-N-acetyl-alpha-D-muramoyl-L-alanyl-D-glutamyl-meso-2,6-diaminopimeloyl-D-alanyl-D-alanine + UMP. It participates in cell wall biogenesis; peptidoglycan biosynthesis. In terms of biological role, catalyzes the initial step of the lipid cycle reactions in the biosynthesis of the cell wall peptidoglycan: transfers peptidoglycan precursor phospho-MurNAc-pentapeptide from UDP-MurNAc-pentapeptide onto the lipid carrier undecaprenyl phosphate, yielding undecaprenyl-pyrophosphoryl-MurNAc-pentapeptide, known as lipid I. The protein is Phospho-N-acetylmuramoyl-pentapeptide-transferase of Cupriavidus metallidurans (strain ATCC 43123 / DSM 2839 / NBRC 102507 / CH34) (Ralstonia metallidurans).